We begin with the raw amino-acid sequence, 1383 residues long: DNA-directed RNA polymerase subunit beta (1383 aa).

It belongs to the RNA polymerase beta chain family. The RNAP catalytic core consists of 2 alpha, 1 beta, 1 beta' and 1 omega subunit. When a sigma factor is associated with the core the holoenzyme is formed, which can initiate transcription.

It catalyses the reaction RNA(n) + a ribonucleoside 5'-triphosphate = RNA(n+1) + diphosphate. Its function is as follows. DNA-dependent RNA polymerase catalyzes the transcription of DNA into RNA using the four ribonucleoside triphosphates as substrates. In Bartonella tribocorum (strain CIP 105476 / IBS 506), this protein is DNA-directed RNA polymerase subunit beta.